Reading from the N-terminus, the 463-residue chain is Mitochondrial dynamics protein MID51 (463 aa).

Topologically, residues 1–23 (MAGAGERKGKKDDNGIGTAIDFV) are mitochondrial intermembrane. The chain crosses the membrane as a helical span at residues 24 to 46 (LSNARLVLGVGGAAMLGIATLAV). The Cytoplasmic portion of the chain corresponds to 47-463 (KRMYDRAISA…LSEPEVLLQT (417 aa)). The tract at residues 49 to 195 (MYDRAISAPT…LSGSLYDDLQ (147 aa)) is dimerization. Serine 55, serine 59, serine 79, and serine 94 each carry phosphoserine. Residues 57–77 (PTSPTRLSHSGKRSWEEPNWM) form a disordered region. The interval 160–169 (AAVDICAELR) is important for interaction with DNM1L. Residues serine 187, serine 189, and histidine 201 each contribute to the ADP site. The segment at 234 to 243 (RRENPEYFPR) is important for interaction with DNM1L. The ADP site is built by serine 340, arginine 342, and lysine 368.

Belongs to the MID49/MID51 family. As to quaternary structure, homodimer. Interacts with DNM1L.

The protein resides in the mitochondrion outer membrane. Functionally, mitochondrial outer membrane protein which regulates mitochondrial fission/fusion dynamics. Promotes the recruitment and association of the fission mediator dynamin-related protein 1 (DNM1L) to the mitochondrial surface independently of the mitochondrial fission FIS1 and MFF proteins. Regulates DNM1L GTPase activity and DNM1L oligomerization. Binds ADP and can also bind GDP, although with lower affinity. Does not bind CDP, UDP, ATP, AMP or GTP. Inhibits DNM1L GTPase activity in the absence of bound ADP. Requires ADP to stimulate DNM1L GTPase activity and the assembly of DNM1L into long, oligomeric tubules with a spiral pattern, as opposed to the ring-like DNM1L oligomers observed in the absence of bound ADP. Does not require ADP for its function in recruiting DNM1L. In Mus musculus (Mouse), this protein is Mitochondrial dynamics protein MID51 (Mief1).